Consider the following 215-residue polypeptide: MHTVKLLCVVFSCLCAVAWASSNRQPCHSPPLTSGTMKVVSTGGHDLASGEFSYDSKANKFRFVEDTAHANKTSHMDVLVHFEEGVLYEIDSKNESCKKETLQFRKHLMEIPPDATHESEIYMGSPSITEQGLRVRVWNGKLPELHAHYSLSTTSCGCLPVSGSYYGDKKDLLFSFFGVETEVDDPQVFVPPAYCEAVAFEEAPDDHSFFDLFHD.

The first 20 residues, 1 to 20, serve as a signal peptide directing secretion; it reads MHTVKLLCVVFSCLCAVAWA. N-linked (GlcNAc...) asparagine glycans are attached at residues N71 and N94.

It belongs to the ependymin family. As to quaternary structure, forms disulfide-linked dimers. Post-translationally, binds calcium through the terminal sialic acids. In terms of tissue distribution, EPDs are synthesized in the meninx and secreted in the cerebrospinal fluid.

It localises to the secreted. Its function is as follows. May play a role in neural plasticity. May be involved during axon regeneration. The chain is Ependymin (epd) from Cyprinus carpio (Common carp).